The primary structure comprises 204 residues: Recombination protein RecR (204 aa).

The C4-type zinc-finger motif lies at 58 to 75 (CSICQNVTDRDADPCRIC). Residues 83 to 181 (SVICVVESPV…MVTKIARGIP (99 aa)) form the Toprim domain.

Belongs to the RecR family.

May play a role in DNA repair. It seems to be involved in an RecBC-independent recombinational process of DNA repair. It may act with RecF and RecO. This is Recombination protein RecR from Chlorobium phaeovibrioides (strain DSM 265 / 1930) (Prosthecochloris vibrioformis (strain DSM 265)).